Reading from the N-terminus, the 314-residue chain is Probable 5-dehydro-4-deoxyglucarate dehydratase (314 aa).

It belongs to the DapA family.

It carries out the reaction 5-dehydro-4-deoxy-D-glucarate + H(+) = 2,5-dioxopentanoate + CO2 + H2O. It functions in the pathway carbohydrate acid metabolism; D-glucarate degradation; 2,5-dioxopentanoate from D-glucarate: step 2/2. This is Probable 5-dehydro-4-deoxyglucarate dehydratase from Bradyrhizobium diazoefficiens (strain JCM 10833 / BCRC 13528 / IAM 13628 / NBRC 14792 / USDA 110).